A 223-amino-acid polypeptide reads, in one-letter code: Thiamine-phosphate synthase (223 aa).

Residues 45–49 (QYREK) and asparagine 77 contribute to the 4-amino-2-methyl-5-(diphosphooxymethyl)pyrimidine site. Mg(2+)-binding residues include aspartate 78 and aspartate 97. Threonine 116 is a binding site for 4-amino-2-methyl-5-(diphosphooxymethyl)pyrimidine. Residue 142–144 (SYT) coordinates 2-[(2R,5Z)-2-carboxy-4-methylthiazol-5(2H)-ylidene]ethyl phosphate. A 4-amino-2-methyl-5-(diphosphooxymethyl)pyrimidine-binding site is contributed by lysine 145. Residues glycine 173 and 193–194 (VT) each bind 2-[(2R,5Z)-2-carboxy-4-methylthiazol-5(2H)-ylidene]ethyl phosphate.

The protein belongs to the thiamine-phosphate synthase family. Requires Mg(2+) as cofactor.

It carries out the reaction 2-[(2R,5Z)-2-carboxy-4-methylthiazol-5(2H)-ylidene]ethyl phosphate + 4-amino-2-methyl-5-(diphosphooxymethyl)pyrimidine + 2 H(+) = thiamine phosphate + CO2 + diphosphate. It catalyses the reaction 2-(2-carboxy-4-methylthiazol-5-yl)ethyl phosphate + 4-amino-2-methyl-5-(diphosphooxymethyl)pyrimidine + 2 H(+) = thiamine phosphate + CO2 + diphosphate. The enzyme catalyses 4-methyl-5-(2-phosphooxyethyl)-thiazole + 4-amino-2-methyl-5-(diphosphooxymethyl)pyrimidine + H(+) = thiamine phosphate + diphosphate. Its pathway is cofactor biosynthesis; thiamine diphosphate biosynthesis; thiamine phosphate from 4-amino-2-methyl-5-diphosphomethylpyrimidine and 4-methyl-5-(2-phosphoethyl)-thiazole: step 1/1. Its function is as follows. Condenses 4-methyl-5-(beta-hydroxyethyl)thiazole monophosphate (THZ-P) and 2-methyl-4-amino-5-hydroxymethyl pyrimidine pyrophosphate (HMP-PP) to form thiamine monophosphate (TMP). The chain is Thiamine-phosphate synthase from Dictyoglomus turgidum (strain DSM 6724 / Z-1310).